The following is a 783-amino-acid chain: Centrosomal protein of 89 kDa (783 aa).

The segment at 28–49 is disordered; that stretch reads PKAAVPRTPPPRSPNPSPERPR. Pro residues predominate over residues 34 to 45; sequence RTPPPRSPNPSP. A Phosphoserine modification is found at Ser50. 2 disordered regions span residues 63–157 and 176–226; these read GRTV…DDLY and DENI…DITG. The segment covering 94-107 has biased composition (polar residues); that stretch reads ATTSQLRPRPNWQS. Basic and acidic residues-rich tracts occupy residues 139–155 and 196–214; these read ELGD…HSDD and QQKD…KPPL. Coiled-coil stretches lie at residues 234–333 and 369–719; these read EITR…SRYQ and LLLA…GELE.

Its subcellular location is the cytoplasm. The protein localises to the cytosol. It is found in the cytoskeleton. It localises to the microtubule organizing center. The protein resides in the centrosome. Its subcellular location is the spindle pole. The protein localises to the centriole. It is found in the mitochondrion intermembrane space. Its function is as follows. Required for ciliogenesis. Also plays a role in mitochondrial metabolism where it may modulate complex IV activity. This Homo sapiens (Human) protein is Centrosomal protein of 89 kDa (CEP89).